A 282-amino-acid chain; its full sequence is Pantothenate synthetase (282 aa).

33 to 40 (MGALHAGH) is a binding site for ATP. Catalysis depends on His40, which acts as the Proton donor. Gln64 serves as a coordination point for (R)-pantoate. Gln64 contributes to the beta-alanine binding site. Position 150–153 (150–153 (GEKD)) interacts with ATP. Position 156 (Gln156) interacts with (R)-pantoate. ATP-binding positions include Val179 and 187–190 (LSSR).

This sequence belongs to the pantothenate synthetase family. Homodimer.

It is found in the cytoplasm. The catalysed reaction is (R)-pantoate + beta-alanine + ATP = (R)-pantothenate + AMP + diphosphate + H(+). Its pathway is cofactor biosynthesis; (R)-pantothenate biosynthesis; (R)-pantothenate from (R)-pantoate and beta-alanine: step 1/1. Catalyzes the condensation of pantoate with beta-alanine in an ATP-dependent reaction via a pantoyl-adenylate intermediate. In Rhodospirillum rubrum (strain ATCC 11170 / ATH 1.1.1 / DSM 467 / LMG 4362 / NCIMB 8255 / S1), this protein is Pantothenate synthetase.